Here is a 380-residue protein sequence, read N- to C-terminus: Cytochrome b (380 aa).

The next 4 membrane-spanning stretches (helical) occupy residues 34-54, 78-99, 114-134, and 179-199; these read FGSL…LLAM, WLIR…FLHI, WNTG…GYVL, and FFAL…IHLT. Residues H84 and H98 each coordinate heme b. Heme b-binding residues include H183 and H197. H202 is an a ubiquinone binding site. The next 4 membrane-spanning stretches (helical) occupy residues 227–247, 289–309, 321–341, and 348–368; these read IKDI…ALFS, LGGV…PFLH, LSQT…WIGS, and FIII…ILFP.

Belongs to the cytochrome b family. In terms of assembly, the cytochrome bc1 complex contains 11 subunits: 3 respiratory subunits (MT-CYB, CYC1 and UQCRFS1), 2 core proteins (UQCRC1 and UQCRC2) and 6 low-molecular weight proteins (UQCRH/QCR6, UQCRB/QCR7, UQCRQ/QCR8, UQCR10/QCR9, UQCR11/QCR10 and a cleavage product of UQCRFS1). This cytochrome bc1 complex then forms a dimer. Heme b is required as a cofactor.

It is found in the mitochondrion inner membrane. Component of the ubiquinol-cytochrome c reductase complex (complex III or cytochrome b-c1 complex) that is part of the mitochondrial respiratory chain. The b-c1 complex mediates electron transfer from ubiquinol to cytochrome c. Contributes to the generation of a proton gradient across the mitochondrial membrane that is then used for ATP synthesis. The protein is Cytochrome b (MT-CYB) of Alectoris chukar (Chukar partridge).